A 340-amino-acid chain; its full sequence is Heat-inducible transcription repressor HrcA (340 aa).

This sequence belongs to the HrcA family.

Its function is as follows. Negative regulator of class I heat shock genes (grpE-dnaK-dnaJ and groELS operons). Prevents heat-shock induction of these operons. In Chromobacterium violaceum (strain ATCC 12472 / DSM 30191 / JCM 1249 / CCUG 213 / NBRC 12614 / NCIMB 9131 / NCTC 9757 / MK), this protein is Heat-inducible transcription repressor HrcA.